Consider the following 181-residue polypeptide: MFKDEMRQTPNKPLPIAVVGEAILKQQAIEVRDFDDTLSQLASQMAASMVEAKGVGIAAPQVHSPLALFIMASRPNERYPDAPLMEPLVVVNPQIVLRSLQLEKGEEGCLSVPGQRFTIWRPQTIVVRYQNLAGQWQHSELTGFIARIFQHEFDHLQGITLLERSQMPEQKLMAQEGKPQA.

Fe cation contacts are provided by Cys-109 and His-151. Glu-152 is an active-site residue. His-155 contacts Fe cation.

The protein belongs to the polypeptide deformylase family. Fe(2+) is required as a cofactor.

It carries out the reaction N-terminal N-formyl-L-methionyl-[peptide] + H2O = N-terminal L-methionyl-[peptide] + formate. In terms of biological role, removes the formyl group from the N-terminal Met of newly synthesized proteins. Requires at least a dipeptide for an efficient rate of reaction. N-terminal L-methionine is a prerequisite for activity but the enzyme has broad specificity at other positions. The protein is Peptide deformylase 2 of Shewanella oneidensis (strain ATCC 700550 / JCM 31522 / CIP 106686 / LMG 19005 / NCIMB 14063 / MR-1).